The primary structure comprises 350 residues: Lipoyl synthase, mitochondrial (350 aa).

Cys-83, Cys-88, Cys-94, Cys-113, Cys-117, Cys-120, and Ser-328 together coordinate [4Fe-4S] cluster. The Radical SAM core domain occupies 96–317; sequence GGESGTATAT…EKVGNELGFA (222 aa).

The protein belongs to the radical SAM superfamily. Lipoyl synthase family. Requires [4Fe-4S] cluster as cofactor.

The protein localises to the mitochondrion. The catalysed reaction is [[Fe-S] cluster scaffold protein carrying a second [4Fe-4S](2+) cluster] + N(6)-octanoyl-L-lysyl-[protein] + 2 oxidized [2Fe-2S]-[ferredoxin] + 2 S-adenosyl-L-methionine + 4 H(+) = [[Fe-S] cluster scaffold protein] + N(6)-[(R)-dihydrolipoyl]-L-lysyl-[protein] + 4 Fe(3+) + 2 hydrogen sulfide + 2 5'-deoxyadenosine + 2 L-methionine + 2 reduced [2Fe-2S]-[ferredoxin]. Its pathway is protein modification; protein lipoylation via endogenous pathway; protein N(6)-(lipoyl)lysine from octanoyl-[acyl-carrier-protein]: step 2/2. In terms of biological role, catalyzes the radical-mediated insertion of two sulfur atoms into the C-6 and C-8 positions of the octanoyl moiety bound to the lipoyl domains of lipoate-dependent enzymes, thereby converting the octanoylated domains into lipoylated derivatives. The chain is Lipoyl synthase, mitochondrial from Trichoplax adhaerens (Trichoplax reptans).